A 128-amino-acid polypeptide reads, in one-letter code: DNA-directed RNA polymerase subunit omega (128 aa).

A disordered region spans residues 87–106 (ARSSQAAPKSAPGQEIGKSF).

This sequence belongs to the RNA polymerase subunit omega family. As to quaternary structure, the RNAP catalytic core consists of 2 alpha, 1 beta, 1 beta' and 1 omega subunit. When a sigma factor is associated with the core the holoenzyme is formed, which can initiate transcription.

The catalysed reaction is RNA(n) + a ribonucleoside 5'-triphosphate = RNA(n+1) + diphosphate. In terms of biological role, promotes RNA polymerase assembly. Latches the N- and C-terminal regions of the beta' subunit thereby facilitating its interaction with the beta and alpha subunits. This is DNA-directed RNA polymerase subunit omega from Anaplasma marginale (strain Florida).